We begin with the raw amino-acid sequence, 1508 residues long: Ras guanine nucleotide exchange factor Y (1508 aa).

Disordered regions lie at residues 1 to 73 (MIII…NNNE), 128 to 182 (KVLS…PKSV), 197 to 272 (IDNN…YSTS), 396 to 517 (ILQC…EDED), 565 to 593 (LSENRTKDLNQPSSQFSPSTSPSTNSIPT), 606 to 727 (LPNI…AEPS), 831 to 1021 (NVII…SNKE), and 1153 to 1172 (TNEDEDNSNSNSNSNKTNKN). 2 stretches are compositionally biased toward low complexity: residues 9–22 (NINNSNNSNSNNNS) and 33–72 (NNNNTITGKNTNEIMNNNNNSNNNNNNNNNNNNNNNNNNN). Polar residues-rich tracts occupy residues 128–150 (KVLSSPSKEVNSLKKSTNGTNTI) and 172–182 (DRTSQDIPKSV). Residues 199 to 216 (NNTTNNNSNNNNNSSLST) show a composition bias toward low complexity. Residues 223-232 (DSLETNPIKD) are compositionally biased toward basic and acidic residues. Over residues 233-250 (EESEESEESEESKEEEEE) the composition is skewed to acidic residues. Positions 255-272 (IKTTKTTSETIESSYSTS) are enriched in low complexity. The segment covering 399–409 (CKDDSSSKDQD) has biased composition (basic and acidic residues). The span at 413–447 (NNSAGSSGNSSASNSNRNSIAFSSSNHFSSESSQS) shows a compositional bias: low complexity. Over residues 465 to 475 (PQSPSPSPSPP) the composition is skewed to pro residues. The span at 492–510 (FNQQTNFSVSPTKSPSNEK) shows a compositional bias: polar residues. Low complexity-rich tracts occupy residues 574 to 593 (NQPSSQFSPSTSPSTNSIPT), 606 to 660 (LPNI…LTES), 668 to 687 (NNNNNNNKNINNNNNNNNNN), 831 to 855 (NVIISNNTGNNNNNNNSSKNNNTVK), 862 to 891 (NKSSSSSQNNSPPSDFSLSVSPSPCSSLTP), 942 to 984 (SLWS…SPPT), 993 to 1019 (ITTGSSPPSTAGTSPPNDNGNNNNNSN), and 1160 to 1172 (SNSNSNSNKTNKN). Residues 659 to 686 (ESLKTRIEENNNNNNNKNINNNNNNNNN) adopt a coiled-coil conformation. The 161-residue stretch at 1074 to 1234 (NRIKVRSASL…IILKIIDRKA (161 aa)) folds into the N-terminal Ras-GEF domain. A Ras-GEF domain is found at 1278–1508 (DDLEIARQLT…LYKQSKIIEP (231 aa)).

In terms of biological role, promotes the exchange of Ras-bound GDP by GTP. This Dictyostelium discoideum (Social amoeba) protein is Ras guanine nucleotide exchange factor Y (gefY).